The following is a 90-amino-acid chain: Phosphocarrier protein HPr (90 aa).

In terms of domain architecture, HPr spans 1 to 89; it reads MPALEITIIN…ELINNRFDEG (89 aa). Catalysis depends on H15, which acts as the Pros-phosphohistidine intermediate.

Belongs to the HPr family.

It localises to the cytoplasm. Its function is as follows. General (non sugar-specific) component of the phosphoenolpyruvate-dependent sugar phosphotransferase system (sugar PTS). This major carbohydrate active-transport system catalyzes the phosphorylation of incoming sugar substrates concomitantly with their translocation across the cell membrane. The phosphoryl group from phosphoenolpyruvate (PEP) is transferred to the phosphoryl carrier protein HPr by enzyme I. Phospho-HPr then transfers it to the PTS EIIA domain. This is Phosphocarrier protein HPr (ptsH) from Pseudomonas aeruginosa (strain ATCC 15692 / DSM 22644 / CIP 104116 / JCM 14847 / LMG 12228 / 1C / PRS 101 / PAO1).